Reading from the N-terminus, the 326-residue chain is Vitamin B12 import system permease protein BtuC (326 aa).

The next 9 helical transmembrane spans lie at 15-35 (WLLS…CAGE), 61-81 (LAVL…QALF), 88-108 (PGLL…VLLG), 112-132 (LPGW…TLIL), 146-166 (LLAG…AIYF), 184-204 (GGVD…LIWI), 240-260 (GWMV…GLVI), 274-294 (VLLP…DVVA), and 302-322 (ELPI…WLLL).

The protein belongs to the binding-protein-dependent transport system permease family. FecCD subfamily. As to quaternary structure, the complex is composed of two ATP-binding proteins (BtuD), two transmembrane proteins (BtuC) and a solute-binding protein (BtuF).

The protein localises to the cell inner membrane. Part of the ABC transporter complex BtuCDF involved in vitamin B12 import. Involved in the translocation of the substrate across the membrane. The protein is Vitamin B12 import system permease protein BtuC of Salmonella agona (strain SL483).